Here is a 163-residue protein sequence, read N- to C-terminus: Regulatory protein RecX (163 aa).

The tract at residues Met-1 to Val-21 is disordered.

The protein belongs to the RecX family.

It is found in the cytoplasm. Its function is as follows. Modulates RecA activity. The sequence is that of Regulatory protein RecX from Stenotrophomonas maltophilia (strain R551-3).